We begin with the raw amino-acid sequence, 457 residues long: tRNA-2-methylthio-N(6)-dimethylallyladenosine synthase (457 aa).

Positions 19–134 constitute an MTTase N-terminal domain; it reads RKLFIETYGC…LPNLVGAVEH (116 aa). 6 residues coordinate [4Fe-4S] cluster: Cys28, Cys64, Cys98, Cys172, Cys176, and Cys179. The Radical SAM core domain maps to 158–390; the sequence is PGVHISGFVS…IDLQNKLSEE (233 aa). Residues 393-456 enclose the TRAM domain; the sequence is LRDIGKTFEV…SATLFGEPVE (64 aa).

Belongs to the methylthiotransferase family. MiaB subfamily. Monomer. Requires [4Fe-4S] cluster as cofactor.

Its subcellular location is the cytoplasm. The catalysed reaction is N(6)-dimethylallyladenosine(37) in tRNA + (sulfur carrier)-SH + AH2 + 2 S-adenosyl-L-methionine = 2-methylsulfanyl-N(6)-dimethylallyladenosine(37) in tRNA + (sulfur carrier)-H + 5'-deoxyadenosine + L-methionine + A + S-adenosyl-L-homocysteine + 2 H(+). Catalyzes the methylthiolation of N6-(dimethylallyl)adenosine (i(6)A), leading to the formation of 2-methylthio-N6-(dimethylallyl)adenosine (ms(2)i(6)A) at position 37 in tRNAs that read codons beginning with uridine. This is tRNA-2-methylthio-N(6)-dimethylallyladenosine synthase from Parabacteroides distasonis (strain ATCC 8503 / DSM 20701 / CIP 104284 / JCM 5825 / NCTC 11152).